The chain runs to 279 residues: Thymidylate synthase (279 aa).

133–134 (RR) contacts dUMP. Residue C154 is the Nucleophile of the active site. DUMP is bound by residues 178-181 (RSND), N189, and 219-221 (HIY). D181 provides a ligand contact to (6R)-5,10-methylene-5,6,7,8-tetrahydrofolate. A278 contributes to the (6R)-5,10-methylene-5,6,7,8-tetrahydrofolate binding site.

The protein belongs to the thymidylate synthase family. Bacterial-type ThyA subfamily. As to quaternary structure, homodimer.

It is found in the cytoplasm. It catalyses the reaction dUMP + (6R)-5,10-methylene-5,6,7,8-tetrahydrofolate = 7,8-dihydrofolate + dTMP. The protein operates within pyrimidine metabolism; dTTP biosynthesis. In terms of biological role, catalyzes the reductive methylation of 2'-deoxyuridine-5'-monophosphate (dUMP) to 2'-deoxythymidine-5'-monophosphate (dTMP) while utilizing 5,10-methylenetetrahydrofolate (mTHF) as the methyl donor and reductant in the reaction, yielding dihydrofolate (DHF) as a by-product. This enzymatic reaction provides an intracellular de novo source of dTMP, an essential precursor for DNA biosynthesis. The chain is Thymidylate synthase from Streptococcus pyogenes serotype M3 (strain SSI-1).